The following is a 256-amino-acid chain: Small ribosomal subunit protein eS1 (256 aa).

Basic residues predominate over residues 1-18; sequence MAVGKNKRLSKGKKGVKK. Residues 1–21 are disordered; sequence MAVGKNKRLSKGKKGVKKRTV. Ala-2 bears the N-acetylalanine; partial mark.

The protein belongs to the eukaryotic ribosomal protein eS1 family. Component of the small ribosomal subunit. Mature ribosomes consist of a small (40S) and a large (60S) subunit. The 40S subunit contains about 33 different proteins and 1 molecule of RNA (18S). The 60S subunit contains about 49 different proteins and 3 molecules of RNA (25S, 5.8S and 5S).

The protein resides in the cytoplasm. This chain is Small ribosomal subunit protein eS1 (rps1), found in Neosartorya fischeri (strain ATCC 1020 / DSM 3700 / CBS 544.65 / FGSC A1164 / JCM 1740 / NRRL 181 / WB 181) (Aspergillus fischerianus).